The chain runs to 328 residues: D-cysteine desulfhydrase (328 aa).

N6-(pyridoxal phosphate)lysine is present on lysine 51.

The protein belongs to the ACC deaminase/D-cysteine desulfhydrase family. As to quaternary structure, homodimer. Requires pyridoxal 5'-phosphate as cofactor.

The enzyme catalyses D-cysteine + H2O = hydrogen sulfide + pyruvate + NH4(+) + H(+). Its function is as follows. Catalyzes the alpha,beta-elimination reaction of D-cysteine and of several D-cysteine derivatives. It could be a defense mechanism against D-cysteine. In Escherichia coli O157:H7, this protein is D-cysteine desulfhydrase.